Consider the following 309-residue polypeptide: tRNA pseudouridine synthase B (309 aa).

The Nucleophile role is filled by Asp-39. Positions 229–306 (LPRVVVHQES…ERVLTLRKVF (78 aa)) constitute a PUA domain.

This sequence belongs to the pseudouridine synthase TruB family. Type 1 subfamily.

It carries out the reaction uridine(55) in tRNA = pseudouridine(55) in tRNA. In terms of biological role, responsible for synthesis of pseudouridine from uracil-55 in the psi GC loop of transfer RNAs. This is tRNA pseudouridine synthase B from Thermotoga maritima (strain ATCC 43589 / DSM 3109 / JCM 10099 / NBRC 100826 / MSB8).